The sequence spans 117 residues: Ig heavy chain V region MOPC 173 (117 aa).

The Ig-like domain maps to 1–116; sequence EVKLLESGGP…WGQGTSVTVS (116 aa). Cys-22 and Cys-96 form a disulfide bridge.

The chain is Ig heavy chain V region MOPC 173 from Mus musculus (Mouse).